The following is a 243-amino-acid chain: Probable transcriptional regulatory protein Patl_0550 (243 aa).

It belongs to the TACO1 family.

The protein localises to the cytoplasm. This Pseudoalteromonas atlantica (strain T6c / ATCC BAA-1087) protein is Probable transcriptional regulatory protein Patl_0550.